A 181-amino-acid chain; its full sequence is Regulator of G-protein signaling 5 (181 aa).

An RGS domain is found at 64–180 (SLDKLLQNNY…VRSEFYQEFI (117 aa)).

The protein localises to the cytoplasm. The protein resides in the membrane. Its function is as follows. Inhibits signal transduction by increasing the GTPase activity of G protein alpha subunits thereby driving them into their inactive GDP-bound form. Binds to G(i)-alpha and G(o)-alpha, but not to G(s)-alpha. The protein is Regulator of G-protein signaling 5 (RGS5) of Sus scrofa (Pig).